The following is a 322-amino-acid chain: MSGIPRSLLGQCAVALLGANARSGLTLHHAFAAYSSAAAPAQSAALIKQLRERSGAPIADVKSMLVEHGWDMDKAYEALRKKGLAAAAKKASRHAAEGLVGASFAASAASSGGSSSSEASTSGGGRGSVVVVELNSETDFVARNELFQKLLREVMGAAHALGPAAALMSARTASGPSVSEAVTALAVQVRENVRLRRAFRVDSGAGGLVFPYVHQAAAPGLGKLASVVVLAPEPDDKAQPLVLDKVVEGRLGKLLSDWCLEAQRYVLEDELTVDKLMARLKKEVGQPVRVASFLRVQCGEGLGAKAGGGDFAAEVARIVSEA.

The protein belongs to the EF-Ts family.

It is found in the mitochondrion. In terms of biological role, associates with the EF-Tu.GDP complex and induces the exchange of GDP to GTP. It remains bound to the aminoacyl-tRNA.EF-Tu.GTP complex up to the GTP hydrolysis stage on the ribosome. The protein is Elongation factor Ts, mitochondrial of Chlamydomonas reinhardtii (Chlamydomonas smithii).